Reading from the N-terminus, the 296-residue chain is Formamidopyrimidine-DNA glycosylase (296 aa).

P2 (schiff-base intermediate with DNA) is an active-site residue. E3 functions as the Proton donor in the catalytic mechanism. K61 serves as the catalytic Proton donor; for beta-elimination activity. H104, R123, and K169 together coordinate DNA. An FPG-type zinc finger spans residues D255–P289. The active-site Proton donor; for delta-elimination activity is the R279.

This sequence belongs to the FPG family. Monomer. Zn(2+) is required as a cofactor.

It carries out the reaction Hydrolysis of DNA containing ring-opened 7-methylguanine residues, releasing 2,6-diamino-4-hydroxy-5-(N-methyl)formamidopyrimidine.. The enzyme catalyses 2'-deoxyribonucleotide-(2'-deoxyribose 5'-phosphate)-2'-deoxyribonucleotide-DNA = a 3'-end 2'-deoxyribonucleotide-(2,3-dehydro-2,3-deoxyribose 5'-phosphate)-DNA + a 5'-end 5'-phospho-2'-deoxyribonucleoside-DNA + H(+). Involved in base excision repair of DNA damaged by oxidation or by mutagenic agents. Acts as a DNA glycosylase that recognizes and removes damaged bases. Has a preference for oxidized purines, such as 7,8-dihydro-8-oxoguanine (8-oxoG). Has AP (apurinic/apyrimidinic) lyase activity and introduces nicks in the DNA strand. Cleaves the DNA backbone by beta-delta elimination to generate a single-strand break at the site of the removed base with both 3'- and 5'-phosphates. The protein is Formamidopyrimidine-DNA glycosylase of Mycobacterium sp. (strain JLS).